A 317-amino-acid polypeptide reads, in one-letter code: Pantothenate kinase (317 aa).

101–108 (GSVAVGKS) lines the ATP pocket.

It belongs to the prokaryotic pantothenate kinase family.

Its subcellular location is the cytoplasm. It carries out the reaction (R)-pantothenate + ATP = (R)-4'-phosphopantothenate + ADP + H(+). It functions in the pathway cofactor biosynthesis; coenzyme A biosynthesis; CoA from (R)-pantothenate: step 1/5. The protein is Pantothenate kinase of Actinobacillus succinogenes (strain ATCC 55618 / DSM 22257 / CCUG 43843 / 130Z).